Here is a 129-residue protein sequence, read N- to C-terminus: Small ribosomal subunit protein uS8 (129 aa).

Belongs to the universal ribosomal protein uS8 family. Part of the 30S ribosomal subunit. Contacts proteins S5 and S12.

In terms of biological role, one of the primary rRNA binding proteins, it binds directly to 16S rRNA central domain where it helps coordinate assembly of the platform of the 30S subunit. This chain is Small ribosomal subunit protein uS8, found in Dichelobacter nodosus (strain VCS1703A).